The primary structure comprises 255 residues: 1-(5-phosphoribosyl)-5-[(5-phosphoribosylamino)methylideneamino] imidazole-4-carboxamide isomerase (255 aa).

The active-site Proton acceptor is Asp8. Asp129 functions as the Proton donor in the catalytic mechanism.

The protein belongs to the HisA/HisF family.

The protein localises to the cytoplasm. It catalyses the reaction 1-(5-phospho-beta-D-ribosyl)-5-[(5-phospho-beta-D-ribosylamino)methylideneamino]imidazole-4-carboxamide = 5-[(5-phospho-1-deoxy-D-ribulos-1-ylimino)methylamino]-1-(5-phospho-beta-D-ribosyl)imidazole-4-carboxamide. It functions in the pathway amino-acid biosynthesis; L-histidine biosynthesis; L-histidine from 5-phospho-alpha-D-ribose 1-diphosphate: step 4/9. This chain is 1-(5-phosphoribosyl)-5-[(5-phosphoribosylamino)methylideneamino] imidazole-4-carboxamide isomerase, found in Parasynechococcus marenigrum (strain WH8102).